The following is a 578-amino-acid chain: Proline--tRNA ligase (578 aa).

The protein belongs to the class-II aminoacyl-tRNA synthetase family. ProS type 1 subfamily. Homodimer.

The protein resides in the cytoplasm. The enzyme catalyses tRNA(Pro) + L-proline + ATP = L-prolyl-tRNA(Pro) + AMP + diphosphate. In terms of biological role, catalyzes the attachment of proline to tRNA(Pro) in a two-step reaction: proline is first activated by ATP to form Pro-AMP and then transferred to the acceptor end of tRNA(Pro). As ProRS can inadvertently accommodate and process non-cognate amino acids such as alanine and cysteine, to avoid such errors it has two additional distinct editing activities against alanine. One activity is designated as 'pretransfer' editing and involves the tRNA(Pro)-independent hydrolysis of activated Ala-AMP. The other activity is designated 'posttransfer' editing and involves deacylation of mischarged Ala-tRNA(Pro). The misacylated Cys-tRNA(Pro) is not edited by ProRS. The polypeptide is Proline--tRNA ligase (Burkholderia lata (strain ATCC 17760 / DSM 23089 / LMG 22485 / NCIMB 9086 / R18194 / 383)).